The following is a 500-amino-acid chain: Beta-glucosidase 30 (500 aa).

The N-terminal stretch at 1–25 (MGIRMGRRLLFTLFLGALFCNGVYA) is a signal peptide. Q46 is an a beta-D-glucoside binding site. 2 N-linked (GlcNAc...) asparagine glycosylation sites follow: N63 and N114. A beta-D-glucoside is bound by residues H149 and 194 to 195 (NE). Catalysis depends on E195, which acts as the Proton donor. Residues C214 and C222 are joined by a disulfide bond. Y338 provides a ligand contact to a beta-D-glucoside. N363 carries N-linked (GlcNAc...) asparagine glycosylation. E409 provides a ligand contact to a beta-D-glucoside. E409 acts as the Nucleophile in catalysis. 2 N-linked (GlcNAc...) asparagine glycosylation sites follow: N416 and N417. Residues W456, 463-464 (EW), and F472 each bind a beta-D-glucoside.

It belongs to the glycosyl hydrolase 1 family.

The enzyme catalyses Hydrolysis of terminal, non-reducing beta-D-glucosyl residues with release of beta-D-glucose.. The protein is Beta-glucosidase 30 (BGLU30) of Oryza sativa subsp. japonica (Rice).